The chain runs to 1490 residues: WD repeat-containing protein 7 (1490 aa).

7 WD repeats span residues 17 to 56, 62 to 104, 156 to 199, 324 to 366, 404 to 443, 462 to 507, and 558 to 597; these read APTHCISAVLLTDDGATIVTGCHDGQICLWDLSVELQINP, GHTA…CIEF, ISPD…SDMQ, LICP…DKQG, NEPLKVTASVYIPAHGRLVCGREDGSIVIVPATQTAIVQL, GHRN…MKHI, and RHLFPIQVIKWRPSDDYLVVGCSDGSVYVWQMDTGALDRC. Disordered regions lie at residues 761-783 and 911-945; these read DEEEDEEIMRQRREESDPEYRSS and GDHMKKGPTRPPRPSTPDLSKARGSPPTSSNIVQG. Residues 768 to 782 show a composition bias toward basic and acidic residues; that stretch reads IMRQRREESDPEYRS. Phosphoserine is present on Ser935. Over residues 936–945 the composition is skewed to polar residues; the sequence is PPTSSNIVQG. WD repeat units follow at residues 1351–1390 and 1392–1432; these read PAICRFYMVSYYERNHRIAVGARHGSVALYDIRTGKCQTI and GHKG…LGSI. At Ser1456 the chain carries Phosphoserine.

This is WD repeat-containing protein 7 (WDR7) from Homo sapiens (Human).